The chain runs to 417 residues: Serine hydroxymethyltransferase (417 aa).

Lysine 54 is modified (N6-acetyllysine). (6S)-5,6,7,8-tetrahydrofolate is bound by residues leucine 121 and 125–127 (GHL). An N6-(pyridoxal phosphate)lysine modification is found at lysine 229. Lysine 250, lysine 285, and lysine 354 each carry N6-acetyllysine. 355 to 357 (SPF) contributes to the (6S)-5,6,7,8-tetrahydrofolate binding site. At lysine 375 the chain carries N6-acetyllysine.

The protein belongs to the SHMT family. As to quaternary structure, homodimer. It depends on pyridoxal 5'-phosphate as a cofactor.

It localises to the cytoplasm. The enzyme catalyses (6R)-5,10-methylene-5,6,7,8-tetrahydrofolate + glycine + H2O = (6S)-5,6,7,8-tetrahydrofolate + L-serine. It participates in one-carbon metabolism; tetrahydrofolate interconversion. Its pathway is amino-acid biosynthesis; glycine biosynthesis; glycine from L-serine: step 1/1. Its function is as follows. Catalyzes the reversible interconversion of serine and glycine with tetrahydrofolate (THF) serving as the one-carbon carrier. This reaction serves as the major source of one-carbon groups required for the biosynthesis of purines, thymidylate, methionine, and other important biomolecules. Also exhibits THF-independent aldolase activity toward beta-hydroxyamino acids, producing glycine and aldehydes, via a retro-aldol mechanism. The polypeptide is Serine hydroxymethyltransferase (Escherichia coli O1:K1 / APEC).